A 438-amino-acid polypeptide reads, in one-letter code: V-type ATP synthase beta chain (438 aa).

Belongs to the ATPase alpha/beta chains family.

Produces ATP from ADP in the presence of a proton gradient across the membrane. The V-type beta chain is a regulatory subunit. This Chlamydia trachomatis serovar A (strain ATCC VR-571B / DSM 19440 / HAR-13) protein is V-type ATP synthase beta chain.